A 235-amino-acid polypeptide reads, in one-letter code: Aspartate/glutamate leucyltransferase (235 aa).

Belongs to the R-transferase family. Bpt subfamily.

Its subcellular location is the cytoplasm. It catalyses the reaction N-terminal L-glutamyl-[protein] + L-leucyl-tRNA(Leu) = N-terminal L-leucyl-L-glutamyl-[protein] + tRNA(Leu) + H(+). The catalysed reaction is N-terminal L-aspartyl-[protein] + L-leucyl-tRNA(Leu) = N-terminal L-leucyl-L-aspartyl-[protein] + tRNA(Leu) + H(+). In terms of biological role, functions in the N-end rule pathway of protein degradation where it conjugates Leu from its aminoacyl-tRNA to the N-termini of proteins containing an N-terminal aspartate or glutamate. The chain is Aspartate/glutamate leucyltransferase from Pseudomonas syringae pv. tomato (strain ATCC BAA-871 / DC3000).